A 198-amino-acid chain; its full sequence is Ribosome maturation factor RimM (198 aa).

The PRC barrel domain occupies 92-168 (DDEYYHADLI…IELPAEIEGE (77 aa)). The span at 163–172 (AEIEGEDQDS) shows a compositional bias: acidic residues. The disordered stretch occupies residues 163–198 (AEIEGEDQDSSDNAGSPEGDAAASNSARHPRESGDP).

The protein belongs to the RimM family. Binds ribosomal protein uS19.

The protein resides in the cytoplasm. An accessory protein needed during the final step in the assembly of 30S ribosomal subunit, possibly for assembly of the head region. Essential for efficient processing of 16S rRNA. May be needed both before and after RbfA during the maturation of 16S rRNA. It has affinity for free ribosomal 30S subunits but not for 70S ribosomes. The sequence is that of Ribosome maturation factor RimM from Bradyrhizobium sp. (strain BTAi1 / ATCC BAA-1182).